Consider the following 234-residue polypeptide: MKKKKEKEKEKQKSINYYIFFFQYTLVYNTIQINKIYKLFYHVFITKKKNYFSKSNYNSPPKSVFSSGRENVYLPEEYKKKIEKENQENLEILENSMKDASHSKTTSLPFSSSSPQSSSSSSSSSSSSNSSLSCSLIFSSTLSLIKSELIKDDTIKYSESDSKSDSEFDSESNSDFDSESESEYEYEYEYESKSNSEQPIINNYLDHTYIYNFAIVVKAIHYLHHFIKEMLKFV.

The chain crosses the membrane as a helical span at residues 13 to 32 (KSINYYIFFFQYTLVYNTIQ). 2 disordered regions span residues 102-130 (HSKTTSLPFSSSSPQSSSSSSSSSSSSNS) and 159-185 (ESDSKSDSEFDSESNSDFDSESESEYE). A compositionally biased stretch (low complexity) spans 103–130 (SKTTSLPFSSSSPQSSSSSSSSSSSSNS). Positions 167–185 (EFDSESNSDFDSESESEYE) are enriched in acidic residues.

It is found in the membrane. This is an uncharacterized protein from Dictyostelium discoideum (Social amoeba).